The following is a 109-amino-acid chain: Large ribosomal subunit protein uL22 (109 aa).

Belongs to the universal ribosomal protein uL22 family. In terms of assembly, part of the 50S ribosomal subunit.

Its function is as follows. This protein binds specifically to 23S rRNA; its binding is stimulated by other ribosomal proteins, e.g. L4, L17, and L20. It is important during the early stages of 50S assembly. It makes multiple contacts with different domains of the 23S rRNA in the assembled 50S subunit and ribosome. In terms of biological role, the globular domain of the protein is located near the polypeptide exit tunnel on the outside of the subunit, while an extended beta-hairpin is found that lines the wall of the exit tunnel in the center of the 70S ribosome. In Polaromonas sp. (strain JS666 / ATCC BAA-500), this protein is Large ribosomal subunit protein uL22.